Here is a 389-residue protein sequence, read N- to C-terminus: Glutamate 5-kinase (389 aa).

Lysine 16 serves as a coordination point for ATP. Positions 56, 143, and 155 each coordinate substrate. Position 175-176 (175-176 (SD)) interacts with ATP. The PUA domain occupies 281-358 (AGELHVDDGA…AEIEAILGYA (78 aa)).

Belongs to the glutamate 5-kinase family.

The protein resides in the cytoplasm. It catalyses the reaction L-glutamate + ATP = L-glutamyl 5-phosphate + ADP. Its pathway is amino-acid biosynthesis; L-proline biosynthesis; L-glutamate 5-semialdehyde from L-glutamate: step 1/2. Functionally, catalyzes the transfer of a phosphate group to glutamate to form L-glutamate 5-phosphate. This Rhizobium etli (strain CIAT 652) protein is Glutamate 5-kinase.